The chain runs to 894 residues: Protein translocase subunit SecA (894 aa).

Residues Gln87, 105–109 (GEGKT), and Asp512 each bind ATP. The segment at 836 to 870 (EVEQAERERQAHAEQESSHYHAEGEGQDFSDLHIG) is disordered. Zn(2+)-binding residues include Cys875, Cys877, Cys886, and His887.

This sequence belongs to the SecA family. As to quaternary structure, monomer and homodimer. Part of the essential Sec protein translocation apparatus which comprises SecA, SecYEG and auxiliary proteins SecDF-YajC and YidC. The cofactor is Zn(2+).

Its subcellular location is the cell inner membrane. It is found in the cytoplasm. It carries out the reaction ATP + H2O + cellular proteinSide 1 = ADP + phosphate + cellular proteinSide 2.. Functionally, part of the Sec protein translocase complex. Interacts with the SecYEG preprotein conducting channel. Has a central role in coupling the hydrolysis of ATP to the transfer of proteins into and across the cell membrane, serving both as a receptor for the preprotein-SecB complex and as an ATP-driven molecular motor driving the stepwise translocation of polypeptide chains across the membrane. In Glaesserella parasuis serovar 5 (strain SH0165) (Haemophilus parasuis), this protein is Protein translocase subunit SecA.